Consider the following 78-residue polypeptide: Acyl carrier protein (78 aa).

The region spanning 2 to 77 is the Carrier domain; it reads SEIASRVKAI…DAVSYIEEHA (76 aa). Ser37 is modified (O-(pantetheine 4'-phosphoryl)serine).

The protein belongs to the acyl carrier protein (ACP) family. In terms of processing, 4'-phosphopantetheine is transferred from CoA to a specific serine of apo-ACP by AcpS. This modification is essential for activity because fatty acids are bound in thioester linkage to the sulfhydryl of the prosthetic group.

The protein localises to the cytoplasm. Its pathway is lipid metabolism; fatty acid biosynthesis. Carrier of the growing fatty acid chain in fatty acid biosynthesis. This is Acyl carrier protein from Bacteroides thetaiotaomicron (strain ATCC 29148 / DSM 2079 / JCM 5827 / CCUG 10774 / NCTC 10582 / VPI-5482 / E50).